A 3413-amino-acid polypeptide reads, in one-letter code: Protein pecanex (3413 aa).

A run of 2 helical transmembrane segments spans residues 33-53 and 57-77; these read VVHL…YLYF and WLTW…VKLA. N-linked (GlcNAc...) asparagine glycosylation is present at N164. Residues 182-195 show a composition bias toward low complexity; the sequence is GSQQDQQSLAGSAS. Disordered regions lie at residues 182-213 and 235-314; these read GSQQ…STSA and GSSA…ENKL. Positions 196–213 are enriched in polar residues; sequence VSKSIRSTGPGGNSSTSA. Residue N208 is glycosylated (N-linked (GlcNAc...) asparagine). Residues 302–312 show a composition bias toward low complexity; it reads AAAAANSNAEN. An N-linked (GlcNAc...) asparagine glycan is attached at N317. Disordered stretches follow at residues 327-363, 379-403, 540-609, and 625-651; these read PSFL…GDAP, LVNP…RLKH, PGTG…GTGG, and PSVS…NPLP. The segment covering 330–354 has biased composition (polar residues); the sequence is LHSQPTNKARGQTNPRQHFITSAPS. Basic and acidic residues predominate over residues 392–402; it reads RSSETHDERLK. The span at 541–559 shows a compositional bias: gly residues; the sequence is GTGGSVTGGGGAAGGGGSA. N-linked (GlcNAc...) asparagine glycans are attached at residues N569 and N581. The span at 569–582 shows a compositional bias: polar residues; sequence NATSYKHGSSQSNK. Positions 599–609 are enriched in gly residues; it reads GTSGGAGGTGG. Residues 625–634 are compositionally biased toward polar residues; that stretch reads PSVSNLSPHP. N685 is a glycosylation site (N-linked (GlcNAc...) asparagine). The span at 720–730 shows a compositional bias: basic and acidic residues; the sequence is EKTAHEEHGDD. Disordered regions lie at residues 720 to 745, 816 to 873, 886 to 921, and 1002 to 1021; these read EKTA…DDEV, HHHS…NRQP, RQEL…DCEQ, and KQTK…HSIS. The segment covering 816 to 826 has biased composition (basic residues); it reads HHHSHLHHHKA. Residues 828 to 846 show a composition bias toward low complexity; sequence SVEGAGPSGGSVAVGVSAG. Acidic residues predominate over residues 847 to 856; sequence NDDEDEETED. N857 carries an N-linked (GlcNAc...) asparagine glycan. Low complexity predominate over residues 1008–1021; sequence SRNSSSSNSTHSIS. 4 N-linked (GlcNAc...) asparagine glycosylation sites follow: N1010, N1015, N1069, and N1199. 2 helical membrane passes run 1315–1335 and 1343–1363; these read MHVL…AAIL and LCAL…VKSV. The N-linked (GlcNAc...) asparagine glycan is linked to N1375. The next 4 helical transmembrane spans lie at 1376–1396, 1423–1443, 1474–1494, and 1504–1524; these read KTVA…LLLL, VVAL…IIFS, LLGS…LYGP, and GTQY…GYHL. An N-linked (GlcNAc...) asparagine glycan is attached at N1572. Disordered stretches follow at residues 1577–1675, 1722–1744, and 1760–1813; these read QLTT…TGEP, DKIS…GAGT, and AEAE…LPDP. 2 stretches are compositionally biased toward basic and acidic residues: residues 1587-1598 and 1607-1620; these read RQTDVKTEHEQI and TVNE…HGAD. A compositionally biased stretch (low complexity) spans 1639 to 1666; it reads KTSSLGSSQQTLGKTISSSKRAITASSS. Polar residues predominate over residues 1725–1738; the sequence is SSSSATNPGDMSTL. A run of 5 repeats spans residues 1776–1777, 1778–1779, 1780–1781, 1782–1783, and 1784–1785. The tract at residues 1776–1785 is 5 X 2 AA tandem repeats of G-T; the sequence is GTGTGTGTGT. N-linked (GlcNAc...) asparagine glycans are attached at residues N1791 and N1804. The segment covering 1799 to 1808 has biased composition (low complexity); that stretch reads GNTNSNGTGN. 5 consecutive transmembrane segments (helical) span residues 1830–1850, 1856–1876, 1914–1934, 1940–1960, and 1976–1996; these read LVVM…TVFT, LNVV…YIVP, LYIY…AISS, QLIV…ICAL, and IIIF…ETFI. A disordered region spans residues 2344–2463; it reads SMGGAPPAQA…HSFANISRQT (120 aa). The span at 2346–2370 shows a compositional bias: low complexity; it reads GGAPPAQAPAAAGGASSAPATAGVA. 2 N-linked (GlcNAc...) asparagine glycosylation sites follow: N2380 and N2387. A compositionally biased stretch (low complexity) spans 2389–2411; that stretch reads SAHGGQAGPSSGQSKSQSQQQLR. Over residues 2437 to 2447 the composition is skewed to gly residues; it reads GTGGVTGGGGD. Over residues 2449 to 2463 the composition is skewed to polar residues; sequence QLSSSHSFANISRQT. N-linked (GlcNAc...) asparagine glycosylation is found at N2458, N2619, and N2717. 2 disordered regions span residues 2908–2997 and 3198–3242; these read LNRE…SSGS and ESST…GDDG. Positions 2940-2956 are enriched in basic and acidic residues; it reads RRPEVGSSRGRDHERRA. A glycan (N-linked (GlcNAc...) asparagine) is linked at N3246. A disordered region spans residues 3295–3413; it reads AEESKEKGTA…NGESEAGTTV (119 aa). Over residues 3310 to 3323 the composition is skewed to acidic residues; that stretch reads EGEEGVGEMEIEPE. A compositionally biased stretch (low complexity) spans 3364-3377; that stretch reads TSSTSSAKSTSSPS. The segment covering 3380–3406 has biased composition (acidic residues); it reads QEEEDAVDPEETPELASEESPSDENGE.

It belongs to the pecanex family.

The protein resides in the membrane. In terms of biological role, involved in neurogenesis. The chain is Protein pecanex (pcx) from Drosophila melanogaster (Fruit fly).